The primary structure comprises 40 residues: Sarcotoxin-1D (40 aa).

It belongs to the cecropin family.

The protein localises to the secreted. Sarcotoxins, which are potent bactericidal proteins, are produced in response to injury. They are cytotoxic to both Gram-positive and Gram-negative bacteria. The protein is Sarcotoxin-1D of Sarcophaga peregrina (Flesh fly).